Consider the following 330-residue polypeptide: ADP-L-glycero-D-manno-heptose-6-epimerase (330 aa).

NADP(+)-binding positions include 11–12 (FI), 32–33 (DN), K39, K54, 75–79 (EGACS), and N92. Y139 serves as the catalytic Proton acceptor. Residue K143 participates in NADP(+) binding. N168 is a binding site for substrate. NADP(+) contacts are provided by V169 and K177. The active-site Proton acceptor is the K177. Substrate contacts are provided by residues R179, H186, 200–203 (FGEY), R213, and Y292.

Belongs to the NAD(P)-dependent epimerase/dehydratase family. HldD subfamily. Homopentamer. The cofactor is NADP(+).

The catalysed reaction is ADP-D-glycero-beta-D-manno-heptose = ADP-L-glycero-beta-D-manno-heptose. It functions in the pathway nucleotide-sugar biosynthesis; ADP-L-glycero-beta-D-manno-heptose biosynthesis; ADP-L-glycero-beta-D-manno-heptose from D-glycero-beta-D-manno-heptose 7-phosphate: step 4/4. In terms of biological role, catalyzes the interconversion between ADP-D-glycero-beta-D-manno-heptose and ADP-L-glycero-beta-D-manno-heptose via an epimerization at carbon 6 of the heptose. This is ADP-L-glycero-D-manno-heptose-6-epimerase from Burkholderia ambifaria (strain ATCC BAA-244 / DSM 16087 / CCUG 44356 / LMG 19182 / AMMD) (Burkholderia cepacia (strain AMMD)).